We begin with the raw amino-acid sequence, 171 residues long: uncharacterized protein (171 aa).

This is an uncharacterized protein from Rhizobium etli.